Here is a 466-residue protein sequence, read N- to C-terminus: Soluble pyridine nucleotide transhydrogenase (466 aa).

Glutamate 36–cysteine 45 contributes to the FAD binding site.

Belongs to the class-I pyridine nucleotide-disulfide oxidoreductase family. Requires FAD as cofactor.

It is found in the cytoplasm. It carries out the reaction NAD(+) + NADPH = NADH + NADP(+). Its function is as follows. Conversion of NADPH, generated by peripheral catabolic pathways, to NADH, which can enter the respiratory chain for energy generation. The protein is Soluble pyridine nucleotide transhydrogenase of Shigella boydii serotype 18 (strain CDC 3083-94 / BS512).